A 178-amino-acid polypeptide reads, in one-letter code: MTLWPHPGSYKIKSATLFCSRDKLGCAFLSESSLCMYFLYNSLSIWALGPHTAGPLLLFSILNCTPARSVTLPISPSRASISFTRMPLPTPPIEGLHEHLPISVNDGVMRVVCAPVLDDAAAASQPACPAPMTTTCVLVVGWKLVKEDMVNRLLRTCKGNEVHEDAKVVTRSIVLWGV.

This is an uncharacterized protein from Saccharomyces cerevisiae (strain ATCC 204508 / S288c) (Baker's yeast).